Here is a 461-residue protein sequence, read N- to C-terminus: Probable tubulin polyglutamylase TTLL9 (461 aa).

Polar residues predominate over residues 1–10; sequence MSRQKNQNSK. Residues 1-20 are disordered; sequence MSRQKNQNSKGHGVSKGKER. Residues 22–402 enclose the TTL domain; the sequence is QRTLIRFKTT…EARLTGKEKR (381 aa). Residues K149 and 155–156 contribute to the ATP site; that span reads QG. Position 155 (Q155) interacts with a protein. Residues 172–208 form a disordered region; the sequence is RKGTSGKKPTGVETQPARANMNPSGSHDTRSSDDQKD. A compositionally biased stretch (basic and acidic residues) spans 198-208; sequence HDTRSSDDQKD. Residues 218 to 221 and 231 to 233 contribute to the ATP site; these read QRYV and KFD. Position 257 (R257) interacts with L-glutamate. Residue 276 to 277 coordinates ATP; that stretch reads TN. K294 provides a ligand contact to L-glutamate. 3 residues coordinate Mg(2+): D348, E361, and N363. Residue K379 coordinates L-glutamate.

This sequence belongs to the tubulin--tyrosine ligase family. Mg(2+) is required as a cofactor. As to expression, highly expressed in brain and testis. Expressed in heart, kidney and lung. In the brain, expressed in ependymal cilia, cortex, corpus callosum and striatum. In the testis, specifically expressed in the seminiferous tubules.

The protein resides in the cytoplasm. It localises to the cytoskeleton. The protein localises to the cilium basal body. Its subcellular location is the flagellum axoneme. It catalyses the reaction (L-glutamyl)(n)-gamma-L-glutamyl-L-glutamyl-[protein] + L-glutamate + ATP = (L-glutamyl)(n+1)-gamma-L-glutamyl-L-glutamyl-[protein] + ADP + phosphate + H(+). Its function is as follows. Probable tubulin polyglutamylase that generates side chains of glutamate on the gamma-carboxyl group of specific glutamate residues within the C-terminal tail of target proteins. Similar to TTLL1, may acquire enzymatic activity only in complex with other proteins as it is most likely lacking domains important for autonomous activity. Mediates tubulin polyglutamylation which induces establishment of microtubule heterogeneity in sperm flagella, thereby playing a role in normal motile flagella axoneme structure and sperm flagella beating pattern. The protein is Probable tubulin polyglutamylase TTLL9 of Mus musculus (Mouse).